Here is a 592-residue protein sequence, read N- to C-terminus: Solute carrier family 13 member 2 (592 aa).

Transmembrane regions (helical) follow at residues 13–33 (SYLIVFFVPILLLPLPILVPS), 53–73 (ALPLAVTALFPLILFPMMGIV), 86–106 (SNLLFFGGLLVAIAVEHWNLH), and 114–134 (LLIVGVRPAPLILGFMLVTAF). Residues 165 to 177 (SSNVEEGSNNPTF) show a composition bias toward polar residues. The disordered stretch occupies residues 165–185 (SSNVEEGSNNPTFELQEPSPQ). Helical transmembrane passes span 221-241 (MSLCVCYSASIGGIATLTGTA), 274-294 (MVILLLLAWLWLQILFLGFNF), 324-344 (PMTFAEKAISILFVILVLLWF), 371-391 (GTVAIFIGIIMFIIPSKFPGL), 450-470 (PLQSVPAPAIAIILSLLVATF), 482-502 (IFLPILASMAQAICLHPLYVM), 511-531 (LAFMLPVATPPNAIVFSFGDL), and 545-565 (IIGVLIIALAINSWGIPLFSL).

It belongs to the SLC13A/DASS transporter (TC 2.A.47) family. NADC subfamily. In terms of tissue distribution, expressed in kidney and intestine. In kidney expressed in the proximal tubule (at protein level).

It is found in the apical cell membrane. The enzyme catalyses succinate(out) + 3 Na(+)(out) = succinate(in) + 3 Na(+)(in). It catalyses the reaction fumarate(out) + 3 Na(+)(out) = fumarate(in) + 3 Na(+)(in). It carries out the reaction 2-oxoglutarate(out) + 3 Na(+)(out) = 2-oxoglutarate(in) + 3 Na(+)(in). With respect to regulation, li(+) decreases succinate transport in the presence of Na(+), by competing at one of the three cation binding sites. Its function is as follows. Low-affinity sodium-dicarboxylate cotransporter, that mediates the entry of citric acid cycle intermediates, such as succinate, citrate, fumarate and alpha-ketoglutarate (2-oxoglutarate) into the small intestine and renal proximal tubule. Transports the dicarboxylate into the cell with a probable stoichiometry of 3 Na(+) for 1 divalent dicarboxylate, rendering the process electrogenic. Citrate is transported in protonated form as a divalent anion, rather than the trivalent form which is normally found in blood. Has a critical role in renal dicarboxylate transport. In Homo sapiens (Human), this protein is Solute carrier family 13 member 2 (SLC13A2).